Consider the following 299-residue polypeptide: Beta-lactamase VEB-1 (299 aa).

A signal peptide spans 1 to 23 (MKIVKRILLVLLSLFFTIVYSNA). Residue S68 is the Nucleophile; acyl-ester intermediate of the active site. Residues K71, S131, and E167 each contribute to the a beta-lactam site. Residue E167 is the Proton acceptor of the active site.

This sequence belongs to the class-A beta-lactamase family.

It carries out the reaction a beta-lactam + H2O = a substituted beta-amino acid. With respect to regulation, inhibited by the beta-lactamase-blocking agent clavulanic acid. Functionally, class A beta-lactamase which confers resistance to the beta-lactam antibiotics, including penicillins and cephalosporins, in E.coli strain JM109. Acts via hydrolysis of the beta-lactam ring. Has penicillin-, and cephalosporin-hydrolyzing activities. The protein is Beta-lactamase VEB-1 of Pseudomonas aeruginosa.